The chain runs to 247 residues: Triosephosphate isomerase (247 aa).

Residue 9–11 coordinates substrate; it reads NWK. His-93 functions as the Electrophile in the catalytic mechanism. Glu-163 functions as the Proton acceptor in the catalytic mechanism. Substrate-binding positions include Gly-169, Ser-209, and 230–231; that span reads GG.

The protein belongs to the triosephosphate isomerase family. Homodimer.

It localises to the cytoplasm. It catalyses the reaction D-glyceraldehyde 3-phosphate = dihydroxyacetone phosphate. The protein operates within carbohydrate biosynthesis; gluconeogenesis. It participates in carbohydrate degradation; glycolysis; D-glyceraldehyde 3-phosphate from glycerone phosphate: step 1/1. Its function is as follows. Involved in the gluconeogenesis. Catalyzes stereospecifically the conversion of dihydroxyacetone phosphate (DHAP) to D-glyceraldehyde-3-phosphate (G3P). This Dinoroseobacter shibae (strain DSM 16493 / NCIMB 14021 / DFL 12) protein is Triosephosphate isomerase.